A 1183-amino-acid polypeptide reads, in one-letter code: Spermatogenesis-associated protein 31G1 (1183 aa).

6 disordered regions span residues 109 to 153 (TPIG…FPTF), 469 to 555 (LMPA…SPWA), 661 to 686 (TVDDVPRSEATGKNTDNTKKCSSSEP), 843 to 884 (ASQG…VSEV), 973 to 1032 (CLHS…TGLL), and 1048 to 1087 (QKRGSSRKSKAEKCGRTARLGSPTNTRENNPAQACRPAEA). Positions 124–134 (CRSEGRPRATE) are enriched in basic and acidic residues. The span at 135-153 (TQEQVLIQSPSPSRSFPTF) shows a compositional bias: polar residues. Residues 487–509 (NPKERLSAPKDVRENLGYREHPH) are compositionally biased toward basic and acidic residues. Residues 671-685 (TGKNTDNTKKCSSSE) are compositionally biased toward polar residues. Residues 847–858 (PNPPAVNPPQPT) show a composition bias toward pro residues. Residues 975-984 (HSSSQPQAQA) are compositionally biased toward polar residues. Positions 993–1002 (QKSKRLKRKA) are enriched in basic residues. Positions 1069-1079 (SPTNTRENNPA) are enriched in polar residues.

Expressed in kidney and testis. Expressed at lower levels in stomach, intestine, epididymis and ovary. Expressed at very low levels in heart and spleen.

Dispensable for normal development and fertility. The protein is Spermatogenesis-associated protein 31G1 (Spata31g1) of Mus musculus (Mouse).